Consider the following 107-residue polypeptide: Flagellar hook-basal body complex protein FliE (107 aa).

The protein belongs to the FliE family.

It is found in the bacterial flagellum basal body. The sequence is that of Flagellar hook-basal body complex protein FliE from Sodalis glossinidius (strain morsitans).